The sequence spans 187 residues: Elongation factor P (187 aa).

It belongs to the elongation factor P family.

The protein resides in the cytoplasm. It participates in protein biosynthesis; polypeptide chain elongation. Its function is as follows. Involved in peptide bond synthesis. Stimulates efficient translation and peptide-bond synthesis on native or reconstituted 70S ribosomes in vitro. Probably functions indirectly by altering the affinity of the ribosome for aminoacyl-tRNA, thus increasing their reactivity as acceptors for peptidyl transferase. This is Elongation factor P from Nocardioides sp. (strain ATCC BAA-499 / JS614).